The primary structure comprises 381 residues: Regulatory protein RapF (381 aa).

3 residues coordinate Mn(2+): Leu40, Met43, and Glu45. TPR repeat units follow at residues 101-137 (YYFNFFRGMYELDQREYLSAIKFFKKAESKLIFVKDR), 148-181 (SESYYYMKQTYFSMDYARQAYEIYKEHEAYNIRL), 182-215 (LQCHSLFATNFLDLKQYEDAISHFQKAYSMAEAE), 222-255 (GRTLYNIGLCKNSQSQYEDAIPYFKRAIAVFEES), 262-295 (PQAYFLITQIHYKLGKIDKAHEYHSKGMAYSQKA), and 337-370 (EDFAIDVAKYYHERKNFQKASAYFLKVEQVRQLI).

Belongs to the Rap family. In terms of assembly, monomer. Is monomeric either alone or in complex with PhrF. Interacts specifically with the C-terminal DNA-binding domain of ComA. Interacts with PhrF.

It is found in the cytoplasm. Inhibited by PhrF, which prevents RapF-ComA interaction. Interaction with PhrF induces a conformational change in RapF, which is propagated to the ComA binding site and causes the dissociation of ComA from RapF. Its function is as follows. Involved in the regulation of genetic competence development. Inhibits the activity of ComA, a transcriptional factor that regulates the development of genetic competence. Acts by binding to ComA, leading to the inhibition of its DNA-binding activity. May also affect transcription independently of ComA. This is Regulatory protein RapF (rapF) from Bacillus subtilis (strain 168).